The sequence spans 606 residues: Gastrula zinc finger protein XlCGF66.1 (606 aa).

Disordered regions lie at residues Met-1–Lys-31 and Thr-240–Lys-271. Over residues His-242–Lys-262 the composition is skewed to basic and acidic residues. C2H2-type zinc fingers lie at residues Phe-273–His-295, Leu-300–His-322, Phe-328–His-350, Asp-384–His-407, Phe-413–His-435, Tyr-441–His-464, Phe-470–His-492, Tyr-498–His-521, Phe-527–His-549, Asp-555–His-578, and Phe-584–His-606.

The protein belongs to the krueppel C2H2-type zinc-finger protein family.

The protein resides in the nucleus. Functionally, may be involved in transcriptional regulation. The polypeptide is Gastrula zinc finger protein XlCGF66.1 (Xenopus laevis (African clawed frog)).